Consider the following 635-residue polypeptide: Protein NSP-INTERACTING KINASE 2 (635 aa).

Residues 1–32 (MLQGRREAKKSYALFSSTFFFFFICFLSSSSA) form the signal peptide. Topologically, residues 33–248 (ELTDKGVNFE…DGGTKNRKIA (216 aa)) are extracellular. Residues N92 and N103 are each glycosylated (N-linked (GlcNAc...) asparagine). LRR repeat units lie at residues 104 to 128 (LTNL…IGKL), 129 to 153 (MKLK…SYSK), 155 to 176 (LQYL…LANM), and 177 to 200 (TQLT…LAKT). N-linked (GlcNAc...) asparagine glycans are attached at residues N140, N162, N175, N188, N219, N231, and N235. Residues 214-242 (TEKDCNGTQPKPMSITLNSSQNKSSDGGT) are disordered. Positions 219–241 (NGTQPKPMSITLNSSQNKSSDGG) are enriched in polar residues. A helical transmembrane segment spans residues 249 to 269 (VVFGVSLTCVCLLIIGFGFLL). The Cytoplasmic portion of the chain corresponds to 270–635 (WWRRRHNKQV…VQAMELSGPR (366 aa)). Phosphothreonine is present on T309. The Protein kinase domain occupies 312-591 (FSSKNLVGKG…EGDGLVEKWE (280 aa)). ATP contacts are provided by residues 318 to 326 (VGKGGFGNV) and K340. A phosphoserine mark is found at S393 and S396. T408 carries the phosphothreonine modification. The tract at residues 422-502 (YLHEQCDPKI…DVFGFGILLL (81 aa)) is interaction with geminivirus NSP protein. Catalysis depends on D435, which acts as the Proton acceptor. Phosphothreonine is present on residues T468, T469, and T474. At Y482 the chain carries Phosphotyrosine. The residue at position 484 (S484) is a Phosphoserine. A Phosphothreonine modification is found at T485. Position 489 is a phosphoserine (S489). At T564 the chain carries Phosphothreonine. Residues 593–613 (SSQRAETNRSYSKPNEFSSSE) are compositionally biased toward polar residues. Positions 593 to 621 (SSQRAETNRSYSKPNEFSSSERYSDLTDD) are disordered.

The protein belongs to the protein kinase superfamily. Ser/Thr protein kinase family. In terms of assembly, oligomer. Interacts with geminivirus nuclear shuttle protein (NSP). Post-translationally, autophosphorylated. As to expression, expressed in flowers and roots.

It is found in the cell membrane. The enzyme catalyses L-seryl-[protein] + ATP = O-phospho-L-seryl-[protein] + ADP + H(+). The catalysed reaction is L-threonyl-[protein] + ATP = O-phospho-L-threonyl-[protein] + ADP + H(+). Its activity is regulated as follows. Inhibited by the viral nuclear shuttle protein (NSP) that binds to the region required for oligomerization. Its function is as follows. Involved in defense response to geminivirus infection. Phosphorylates RPL10A in vitro. The protein is Protein NSP-INTERACTING KINASE 2 (NIK2) of Arabidopsis thaliana (Mouse-ear cress).